We begin with the raw amino-acid sequence, 255 residues long: Accessory gland-specific peptide 26Aa (255 aa).

The N-terminal stretch at 1–18 is a signal peptide; sequence MNLILLCSQILLLLFTVA. A disordered region spans residues 86–110; the sequence is PINNSKSRKNSSTLPSQILTDKPNQ. Over residues 87–110 the composition is skewed to polar residues; that stretch reads INNSKSRKNSSTLPSQILTDKPNQ. N88, N95, and N136 each carry an N-linked (GlcNAc...) asparagine glycan. 2 disordered regions span residues 177 to 196 and 235 to 255; these read NAQNARKSTKSCKKRPSKDI and NNPATDVPTGKSPSEGNPSTT. A compositionally biased stretch (basic residues) spans 183-192; it reads KSTKSCKKRP. Residues 245-255 show a composition bias toward polar residues; the sequence is KSPSEGNPSTT.

It undergoes several cleavages as it is secreted and it is further processed in the recipient female. As to expression, main cells of the accessory glands of males.

It localises to the secreted. Its subcellular location is the extracellular space. Functionally, this protein is transferred from male to female's hemolymph during mating, affecting egglaying and behavior after mating. This is Accessory gland-specific peptide 26Aa (Acp26Aa) from Drosophila sechellia (Fruit fly).